The following is a 123-amino-acid chain: Probable cytochrome c 2.2 (123 aa).

Positions 1 to 21 (MGKKKSDTASGGAIPEGDNEK) are disordered. Cysteine 30, cysteine 33, histidine 34, and methionine 95 together coordinate heme c.

It belongs to the cytochrome c family. Binds 1 heme c group covalently per subunit.

The protein localises to the mitochondrion intermembrane space. In terms of biological role, electron carrier protein. The oxidized form of the cytochrome c heme group can accept an electron from the heme group of the cytochrome c1 subunit of cytochrome reductase. Cytochrome c then transfers this electron to the cytochrome oxidase complex, the final protein carrier in the mitochondrial electron-transport chain. The sequence is that of Probable cytochrome c 2.2 (cyc-2.2) from Caenorhabditis elegans.